Consider the following 219-residue polypeptide: Probable GTP-binding protein EngB (219 aa).

In terms of domain architecture, EngB-type G spans 24–207 (VQPEIAFAGR…HALIESWLRP (184 aa)). Residues 32 to 39 (GRSNAGKS), 59 to 63 (GRTQH), 81 to 84 (DLPG), 148 to 151 (TKCD), and 185 to 188 (LFSA) each bind GTP. The Mg(2+) site is built by serine 39 and threonine 61.

This sequence belongs to the TRAFAC class TrmE-Era-EngA-EngB-Septin-like GTPase superfamily. EngB GTPase family. The cofactor is Mg(2+).

Necessary for normal cell division and for the maintenance of normal septation. The protein is Probable GTP-binding protein EngB of Burkholderia thailandensis (strain ATCC 700388 / DSM 13276 / CCUG 48851 / CIP 106301 / E264).